The chain runs to 654 residues: Tetratricopeptide repeat protein 30 homolog (654 aa).

TPR repeat units lie at residues 10-43 (DGEY…STTR), 44-76 (AGLS…VPDV), 145-178 (ASTK…GGFN), 180-212 (HVAY…GIRN), 393-426 (CRSA…RAWI), 452-485 (SWRL…NYDD), and 535-568 (CIVN…GSGA).

Belongs to the TTC30/dfy-1/fleer family.

It is found in the cell projection. Its subcellular location is the cilium. Required for polyglutamylation of axonemal tubulin in sensory cilia. Plays a role in anterograde intraflagellar transport (IFT), the process by which cilia precursors are transported from the base of the cilium to the site of their incorporation at the tip. The polypeptide is Tetratricopeptide repeat protein 30 homolog (Anopheles gambiae (African malaria mosquito)).